Reading from the N-terminus, the 771-residue chain is Protein lin-54 homolog (771 aa).

Disordered regions lie at residues 21–44 (AMDEDPPASHLTPPPQSAPESAQV) and 68–105 (TNAKSTTSSTTQLLLTPSSSSSTTTKNATPTLPKIPSL). The span at 72–92 (STTSSTTQLLLTPSSSSSTTT) shows a compositional bias: low complexity. A phosphoserine mark is found at Ser288, Ser292, and Ser308. In terms of domain architecture, CRC spans 544 to 657 (PRKPCNCTRS…KCMGCKNFEE (114 aa)). Residues 546–559 (KPCNCTRSQCLKLY) form a DNA-binding region. The Zn(2+) site is built by Cys548, Cys550, Cys555, Cys560, Cys562, Cys569, Cys572, Cys574, and Cys577. The tract at residues 606-619 (IGKGKEGESDRRHS) is linker. Residues Cys622, Cys624, Cys629, Cys634, Cys636, Cys643, Cys647, Cys649, and Cys652 each coordinate Zn(2+). Residues 622–635 (CNCKKSGCLKNYCE) are DNA-binding.

This sequence belongs to the lin-54 family. As to quaternary structure, component of the DREAM complex.

It is found in the nucleus. Functionally, component of the DREAM complex, a multiprotein complex that can both act as a transcription activator or repressor depending on the context. Specifically recognizes the consensus motif 5'-TTYRAA-3' in target DNA. The sequence is that of Protein lin-54 homolog (lin54) from Danio rerio (Zebrafish).